The primary structure comprises 1131 residues: DNA polymerase II large subunit (1131 aa).

It belongs to the archaeal DNA polymerase II family. As to quaternary structure, heterodimer of a large subunit and a small subunit.

The enzyme catalyses DNA(n) + a 2'-deoxyribonucleoside 5'-triphosphate = DNA(n+1) + diphosphate. The catalysed reaction is Exonucleolytic cleavage in the 3'- to 5'-direction to yield nucleoside 5'-phosphates.. In terms of biological role, possesses two activities: a DNA synthesis (polymerase) and an exonucleolytic activity that degrades single-stranded DNA in the 3'- to 5'-direction. Has a template-primer preference which is characteristic of a replicative DNA polymerase. The protein is DNA polymerase II large subunit of Methanococcus maripaludis (strain DSM 14266 / JCM 13030 / NBRC 101832 / S2 / LL).